The following is a 299-amino-acid chain: Acetylglutamate kinase (299 aa).

Residues 66 to 67 (GG), Arg88, and Asn196 contribute to the substrate site.

Belongs to the acetylglutamate kinase family. ArgB subfamily.

It localises to the cytoplasm. The enzyme catalyses N-acetyl-L-glutamate + ATP = N-acetyl-L-glutamyl 5-phosphate + ADP. It functions in the pathway amino-acid biosynthesis; L-arginine biosynthesis; N(2)-acetyl-L-ornithine from L-glutamate: step 2/4. Its function is as follows. Catalyzes the ATP-dependent phosphorylation of N-acetyl-L-glutamate. The polypeptide is Acetylglutamate kinase (Alcanivorax borkumensis (strain ATCC 700651 / DSM 11573 / NCIMB 13689 / SK2)).